Consider the following 195-residue polypeptide: Interferon tau-9 (195 aa).

The signal sequence occupies residues 1–23 (MAFVLSLLMALVLVSYGPGGSLG). Cystine bridges form between C24–C122 and C52–C162.

Belongs to the alpha/beta interferon family. IFN-alphaII subfamily. As to expression, constitutively and exclusively expressed in the mononuclear cells of the extraembryonic trophectoderm.

It is found in the secreted. Paracrine hormone primarily responsible for maternal recognition of pregnancy. Interacts with endometrial receptors, probably type I interferon receptors, and blocks estrogen receptor expression, preventing the estrogen-induced increase in oxytocin receptor expression in the endometrium. This results in the suppression of the pulsatile endometrial release of the luteolytic hormone prostaglandin F2-alpha, hindering the regression of the corpus luteum (luteolysis) and therefore a return to ovarian cyclicity. This, and a possible direct effect of IFN-tau on prostaglandin synthesis, leads in turn to continued ovarian progesterone secretion, which stimulates the secretion by the endometrium of the nutrients required for the growth of the conceptus. In summary, displays particularly high antiviral and antiproliferative potency concurrently with particular weak cytotoxicity, high antiluteolytic activity and immunomodulatory properties. In contrast with other IFNs, IFN-tau is not virally inducible. This Ovis aries (Sheep) protein is Interferon tau-9 (IFNT9).